The primary structure comprises 785 residues: Mitochondrial intermediate peptidase (785 aa).

A mitochondrion-targeting transit peptide spans 1-43; that stretch reads MLTRPAQNALLKSMQPLFRFRGCLLAKSTSTPRRDISTSSRKL. Residue H567 participates in Zn(2+) binding. E568 is an active-site residue. Positions 571 and 574 each coordinate Zn(2+).

This sequence belongs to the peptidase M3 family. Zn(2+) serves as cofactor.

The protein resides in the mitochondrion matrix. It carries out the reaction Release of an N-terminal octapeptide as second stage of processing of some proteins imported into the mitochondrion.. Cleaves proteins, imported into the mitochondrion, to their mature size. While most mitochondrial precursor proteins are processed to the mature form in one step by mitochondrial processing peptidase (MPP), the sequential cleavage by MIP of an octapeptide after initial processing by MPP is a required step for a subgroup of nuclear-encoded precursor proteins destined for the matrix or the inner membrane. This chain is Mitochondrial intermediate peptidase (OCT1), found in Pleurotus djamor (Pink oyster mushroom).